Consider the following 870-residue polypeptide: Breast cancer anti-estrogen resistance protein 1 (870 aa).

Residue M1 is modified to N-acetylmethionine. An SH3 domain is found at 3-65 (HLNVLAKALY…PGNRLKILVG (63 aa)). Residues 70–156 (KPAGPGPGPP…TFSKQTPHHP (87 aa)) are disordered. Residues 73-85 (GPGPGPPATPAQP) show a composition bias toward pro residues. Polar residues predominate over residues 97–111 (SQYTPMLPNTYQPQP). The tract at residues 115–416 (YLVPTPSKAQ…SGVYAVPPPA (302 aa)) is substrate for kinases. Y128 carries the post-translational modification Phosphotyrosine; by SRC. A phosphoserine mark is found at S134 and S139. The segment covering 135 to 151 (PQFQSPPAKQTSTFSKQ) has biased composition (polar residues). Y234 carries the post-translational modification Phosphotyrosine. A Phosphotyrosine; by ABL1 modification is found at Y249. Phosphothreonine is present on T269. S292 bears the Phosphoserine mark. 3 positions are modified to phosphotyrosine: Y362, Y372, and Y410. Disordered regions lie at residues 411–449 (AVPP…VAGP), 609–658 (KATA…NSEG), and 715–734 (IDHD…GRTG). Residues 416 to 426 (AEREAPAEGKR) are compositionally biased toward basic and acidic residues. Low complexity predominate over residues 427–444 (LSASSTGSTRSSQSASSL). Residues S428, S437, and S639 each carry the phosphoserine modification. Over residues 626–655 (TDKTSSIQSRPLPSPPKFTSQDSPDGQYEN) the composition is skewed to polar residues. Positions 635-643 (RPLPSPPKF) match the SH3-binding motif. The divergent helix-loop-helix motif stretch occupies residues 746-796 (FYLEQCEANLTTLTNAVDAFFTAVATNQPPKIFVAHSKFVILSAHKLVFIG).

Belongs to the CAS family. As to quaternary structure, forms complexes in vivo with PTK2/FAK1, adapter protein CRKL and LYN kinase. Heterodimerizes with NEDD9. Component of a complex comprised of SH2D3C, BCAR1/CAS, and CRK. Within the complex, interacts with SH2D3C (via C-terminus), and CRK. Part of a complex comprised of PTPRA, BCAR1, BCAR3 (via SH2 domain) and SRC; the formation of the complex is dependent on integrin mediated-tyrosine phosphorylation of PTPRA. Interacts with BCAR3 (via Ras-GEF domain); the interaction regulates adhesion-dependent serine phosphorylation. Interacts with SMAD2 and SMAD3. Interacts with NPHP1. Interacts with PTK2B/PYK2. Interacts (via C-terminus) with SH2D3C/CHAT isoform 2 (via C-terminus). Interacts with activated CSPG4. Interacts with BMX, INPPL1/SHIP2 and PEAK1. Part of a collagen-stimulated complex involved in cell migration made of CDC42, CRK, TNK2 and BCAR1/p130cas. Interacts with TNK2 via SH3 domains. Interacts (when tyrosine-phosphorylated) with tensin TNS1; the interaction is increased by phosphorylation of TNS1. Post-translationally, PTK2/FAK1 activation mediates phosphorylation at the YDYVHL motif; phosphorylation is most likely catalyzed by SRC family members. SRC-family kinases are recruited to the phosphorylated sites and can phosphorylate other tyrosine residues. Tyrosine phosphorylation is triggered by integrin-mediated adhesion of cells to the extracellular matrix. In terms of processing, dephosphorylated by PTPN14 at Tyr-128. Phosphorylated by SRC kinase in a EDN1- and PTK2B-mediated manner; phosphorylation strengthens its interaction with BCAR3 as part of the PTK2B/BCAR1/BCAR3/RAP1 signaling pathway. Expressed in B-cells (at protein level). Widely expressed with an abundant expression in the testis. Low level of expression seen in the liver, thymus, and peripheral blood leukocytes.

It localises to the cell junction. Its subcellular location is the focal adhesion. The protein resides in the cytoplasm. The protein localises to the cell projection. It is found in the axon. Docking protein which plays a central coordinating role for tyrosine kinase-based signaling related to cell adhesion. Implicated in induction of cell migration and cell branching. Involved in the BCAR3-mediated inhibition of TGFB signaling. This is Breast cancer anti-estrogen resistance protein 1 (BCAR1) from Homo sapiens (Human).